The following is a 165-amino-acid chain: UI (165 aa).

The N-terminal stretch at 1 to 18 (MKPVPLILLLATVLLSSH) is a signal peptide. A Valine amide modification is found at Val-163.

The protein belongs to the sauvagine/corticotropin-releasing factor/urotensin I family.

Its subcellular location is the secreted. In terms of biological role, urotensin is found in the teleost caudal neurosecretory system. It has a suggested role in osmoregulation and as a corticotropin-releasing factor. The non-hormonal portion of this precursor may be a urotensin binding protein, urophysin. The protein is UI of Oncorhynchus mykiss (Rainbow trout).